The following is a 448-amino-acid chain: Phosphoglucosamine mutase (448 aa).

The active-site Phosphoserine intermediate is serine 101. Positions 101, 241, 243, and 245 each coordinate Mg(2+). Serine 101 is modified (phosphoserine).

This sequence belongs to the phosphohexose mutase family. Mg(2+) is required as a cofactor. Post-translationally, activated by phosphorylation.

The enzyme catalyses alpha-D-glucosamine 1-phosphate = D-glucosamine 6-phosphate. Functionally, catalyzes the conversion of glucosamine-6-phosphate to glucosamine-1-phosphate. This chain is Phosphoglucosamine mutase, found in Macrococcus caseolyticus (strain JCSC5402) (Macrococcoides caseolyticum).